The chain runs to 58 residues: MEKRVCSFCGYDIEPGTGKMYVRRDGRVFYFCSGKCEKNMLKLKRKPRKLKWTKHYSR.

Zn(2+)-binding residues include Cys-6, Cys-9, Cys-32, and Cys-36. The C4-type zinc finger occupies 6–36 (CSFCGYDIEPGTGKMYVRRDGRVFYFCSGKC).

It belongs to the eukaryotic ribosomal protein eL24 family. In terms of assembly, part of the 50S ribosomal subunit. Forms a cluster with proteins L3 and L14. Zn(2+) is required as a cofactor.

Functionally, binds to the 23S rRNA. This chain is Large ribosomal subunit protein eL24, found in Archaeoglobus fulgidus (strain ATCC 49558 / DSM 4304 / JCM 9628 / NBRC 100126 / VC-16).